A 451-amino-acid chain; its full sequence is UDP-N-acetylmuramate--L-alanine ligase (451 aa).

110–116 contacts ATP; the sequence is GTHGKTT.

Belongs to the MurCDEF family.

It is found in the cytoplasm. It carries out the reaction UDP-N-acetyl-alpha-D-muramate + L-alanine + ATP = UDP-N-acetyl-alpha-D-muramoyl-L-alanine + ADP + phosphate + H(+). The protein operates within cell wall biogenesis; peptidoglycan biosynthesis. Cell wall formation. This chain is UDP-N-acetylmuramate--L-alanine ligase, found in Francisella tularensis subsp. tularensis (strain SCHU S4 / Schu 4).